Consider the following 154-residue polypeptide: Aspartate carbamoyltransferase regulatory chain (154 aa).

Zn(2+) contacts are provided by Cys-109, Cys-114, Cys-138, and Cys-141.

Belongs to the PyrI family. Contains catalytic and regulatory chains. It depends on Zn(2+) as a cofactor.

In terms of biological role, involved in allosteric regulation of aspartate carbamoyltransferase. The polypeptide is Aspartate carbamoyltransferase regulatory chain (Aeromonas salmonicida (strain A449)).